Reading from the N-terminus, the 245-residue chain is NAD(P)H-hydrate epimerase (245 aa).

Positions 21–221 (MREIDRLAVQ…DLGIPPAVYT (201 aa)) constitute a YjeF N-terminal domain. 72 to 76 (GNGGG) serves as a coordination point for (6S)-NADPHX. The K(+) site is built by N73 and D135. (6S)-NADPHX-binding positions include 139–145 (GYSLLGA) and D168. S171 is a binding site for K(+).

The protein belongs to the NnrE/AIBP family. It depends on K(+) as a cofactor.

It carries out the reaction (6R)-NADHX = (6S)-NADHX. The catalysed reaction is (6R)-NADPHX = (6S)-NADPHX. Catalyzes the epimerization of the S- and R-forms of NAD(P)HX, a damaged form of NAD(P)H that is a result of enzymatic or heat-dependent hydration. This is a prerequisite for the S-specific NAD(P)H-hydrate dehydratase to allow the repair of both epimers of NAD(P)HX. The chain is NAD(P)H-hydrate epimerase from Dehalogenimonas lykanthroporepellens (strain ATCC BAA-1523 / JCM 15061 / BL-DC-9).